Reading from the N-terminus, the 117-residue chain is Putative membrane protein insertion efficiency factor (117 aa).

This sequence belongs to the UPF0161 family.

The protein resides in the cell inner membrane. Could be involved in insertion of integral membrane proteins into the membrane. The sequence is that of Putative membrane protein insertion efficiency factor from Helicobacter pylori (strain ATCC 700392 / 26695) (Campylobacter pylori).